Reading from the N-terminus, the 143-residue chain is Subtelomeric hrmA-associated cluster protein cgnA (143 aa).

29 G-Q-I/R/S repeats span residues 11 to 13 (GQI), 14 to 16 (GPI), 17 to 19 (GQR), 20 to 22 (GQS), 23 to 25 (GQR), 26 to 28 (GQS), 29 to 31 (GQR), 32 to 34 (GQS), 35 to 37 (GQI), 38 to 40 (GQS), 41 to 43 (GQS), 44 to 46 (GQS), 47 to 49 (GQI), 50 to 52 (GQI), 53 to 55 (GQI), 56 to 58 (GQI), 59 to 61 (GQI), 62 to 64 (GQI), 65 to 67 (GQI), 68 to 70 (GQI), 71 to 73 (GQI), 74 to 76 (GQI), 77 to 79 (GQI), 80 to 82 (GQI), 83 to 85 (GQI), 86 to 88 (GQI), 89 to 91 (GQI), 92 to 94 (GQI), and 95 to 97 (GQA). Positions 11-68 (GQIGPIGQRGQSGQRGQSGQRGQSGQIGQSGQSGQSGQIGQIGQIGQIGQIGQIGQIG) constitute a Collagen-like domain. Residues 11–97 (GQIGPIGQRG…IGQIGQIGQA (87 aa)) form a 29 X 3 AA approximate tandem repeats of G-Q-I/R/S region. The tract at residues 16 to 49 (IGQRGQSGQRGQSGQRGQSGQIGQSGQSGQSGQI) is disordered.

It localises to the secreted. In terms of biological role, collagen-like protein; part of the subtelomeric hrmA-associated cluster (HAC) containing genes that alter the hyphal surface (such as reduced total chitin or increased beta-glucan exposure) and perturb inter-hyphal interactions within the developing biofilms, resulting in a loss of vertically aligned polarized growing filaments. Consequently, this hypoxia-typic morphotype (called H-MORPH) with altered biofilm architecture leads to increased hypoxia fitness, increased host inflammation, rapid disease progression, and mortality in a murine model of invasive aspergillosis. CgnA is directly involved in the reduction of total surface chitin and the increase of beta-glucan exposure, and mediates the detachment of the extracellular matrix and especially of its component galactosaminogalactan (GAG). The sequence is that of Subtelomeric hrmA-associated cluster protein cgnA from Aspergillus fumigatus (strain ATCC MYA-4609 / CBS 101355 / FGSC A1100 / Af293) (Neosartorya fumigata).